The primary structure comprises 505 residues: Light-independent protochlorophyllide reductase subunit B (505 aa).

Asp-36 is a [4Fe-4S] cluster binding site. Catalysis depends on Asp-291, which acts as the Proton donor. Substrate is bound at residue 426–427 (GM).

This sequence belongs to the ChlB/BchB/BchZ family. In terms of assembly, protochlorophyllide reductase is composed of three subunits; ChlL, ChlN and ChlB. Forms a heterotetramer of two ChlB and two ChlN subunits. Requires [4Fe-4S] cluster as cofactor.

It catalyses the reaction chlorophyllide a + oxidized 2[4Fe-4S]-[ferredoxin] + 2 ADP + 2 phosphate = protochlorophyllide a + reduced 2[4Fe-4S]-[ferredoxin] + 2 ATP + 2 H2O. It functions in the pathway porphyrin-containing compound metabolism; chlorophyll biosynthesis (light-independent). Component of the dark-operative protochlorophyllide reductase (DPOR) that uses Mg-ATP and reduced ferredoxin to reduce ring D of protochlorophyllide (Pchlide) to form chlorophyllide a (Chlide). This reaction is light-independent. The NB-protein (ChlN-ChlB) is the catalytic component of the complex. This Gloeobacter violaceus (strain ATCC 29082 / PCC 7421) protein is Light-independent protochlorophyllide reductase subunit B.